We begin with the raw amino-acid sequence, 116 residues long: NADH-ubiquinone oxidoreductase chain 3 (116 aa).

The next 3 helical transmembrane spans lie at 8–28, 56–76, and 88–108; these read VVAT…LPSL, FFLI…LLPL, and TLLW…YEWF.

The protein belongs to the complex I subunit 3 family.

It is found in the mitochondrion membrane. The enzyme catalyses a ubiquinone + NADH + 5 H(+)(in) = a ubiquinol + NAD(+) + 4 H(+)(out). Core subunit of the mitochondrial membrane respiratory chain NADH dehydrogenase (Complex I) that is believed to belong to the minimal assembly required for catalysis. Complex I functions in the transfer of electrons from NADH to the respiratory chain. The immediate electron acceptor for the enzyme is believed to be ubiquinone. This chain is NADH-ubiquinone oxidoreductase chain 3 (MT-ND3), found in Scyliorhinus canicula (Small-spotted catshark).